The chain runs to 260 residues: uncharacterized protein (260 aa).

Positions 1–22 (MGYLKGFALYISILILIVFIAG) are cleaved as a signal peptide. The N-palmitoyl cysteine moiety is linked to residue C23. C23 carries S-diacylglycerol cysteine lipidation.

Belongs to the staphylococcal tandem lipoprotein family.

The protein resides in the cell membrane. This is an uncharacterized protein from Staphylococcus aureus (strain MSSA476).